We begin with the raw amino-acid sequence, 548 residues long: Chaperonin GroEL (548 aa).

ATP is bound by residues Thr-29–Pro-32, Asp-86–Thr-90, Gly-413, Asn-476–Leu-478, and Asp-492. The segment covering Pro-522–Asp-531 has biased composition (acidic residues). The tract at residues Pro-522–Met-548 is disordered. Positions Met-532–Met-548 are enriched in gly residues.

The protein belongs to the chaperonin (HSP60) family. As to quaternary structure, forms a cylinder of 14 subunits composed of two heptameric rings stacked back-to-back. Interacts with the co-chaperonin GroES.

It is found in the cytoplasm. It carries out the reaction ATP + H2O + a folded polypeptide = ADP + phosphate + an unfolded polypeptide.. Functionally, together with its co-chaperonin GroES, plays an essential role in assisting protein folding. The GroEL-GroES system forms a nano-cage that allows encapsulation of the non-native substrate proteins and provides a physical environment optimized to promote and accelerate protein folding. In Natranaerobius thermophilus (strain ATCC BAA-1301 / DSM 18059 / JW/NM-WN-LF), this protein is Chaperonin GroEL.